Here is a 243-residue protein sequence, read N- to C-terminus: GTP cyclohydrolase 1 type 2 (243 aa).

5 residues coordinate a divalent metal cation: His-63, His-64, Asp-102, His-209, and Glu-213.

This sequence belongs to the GTP cyclohydrolase I type 2/NIF3 family. As to quaternary structure, homohexamer.

The catalysed reaction is GTP + H2O = 7,8-dihydroneopterin 3'-triphosphate + formate + H(+). It functions in the pathway cofactor biosynthesis; 7,8-dihydroneopterin triphosphate biosynthesis; 7,8-dihydroneopterin triphosphate from GTP: step 1/1. Its function is as follows. Converts GTP to dihydroneopterin triphosphate. The protein is GTP cyclohydrolase 1 type 2 of Helicobacter pylori (strain J99 / ATCC 700824) (Campylobacter pylori J99).